Consider the following 296-residue polypeptide: Protoheme IX farnesyltransferase (296 aa).

The next 9 membrane-spanning stretches (helical) occupy residues 29-49, 54-74, 98-118, 121-141, 147-167, 175-195, 221-241, 246-266, and 275-295; these read LSGL…GHVA, ALTV…NCWM, FTAL…LALV, PLTA…YTPM, LALL…WTAA, GLAL…AVSI, WIAA…PLRV, YGAV…AGVG, and NFFL…FLGA.

Belongs to the UbiA prenyltransferase family. Protoheme IX farnesyltransferase subfamily.

The protein resides in the cell inner membrane. It catalyses the reaction heme b + (2E,6E)-farnesyl diphosphate + H2O = Fe(II)-heme o + diphosphate. It functions in the pathway porphyrin-containing compound metabolism; heme O biosynthesis; heme O from protoheme: step 1/1. In terms of biological role, converts heme B (protoheme IX) to heme O by substitution of the vinyl group on carbon 2 of heme B porphyrin ring with a hydroxyethyl farnesyl side group. This is Protoheme IX farnesyltransferase from Anaeromyxobacter sp. (strain Fw109-5).